The following is a 161-amino-acid chain: V-type proton ATPase 16 kDa proteolipid subunit c 2 (161 aa).

Topologically, residues 1-15 (MSYDLETAERAAYAP) are lumenal. A helical membrane pass occupies residues 16–36 (FFGYMGAASAQIFTVLGAAYG). Residues 37 to 58 (TAKSAVGICSMGVMRPELIMKS) are Cytoplasmic-facing. A helical transmembrane segment spans residues 59-79 (VIPVIMAGIIGIYGLVVAMVL). Over 80 to 98 (KGKVTSASAGYDLNKGFAH) the chain is Lumenal. The chain crosses the membrane as a helical span at residues 99–119 (LAAGLTCGLCGLGAGYAIGIV). Over 120–137 (GDAGVRGTAQQPRLFVGM) the chain is Cytoplasmic. Residues 138–158 (ILILIFSEVLGLYGMIVALIL) traverse the membrane as a helical segment. Residues 159 to 161 (GTS) lie on the Lumenal side of the membrane.

The protein belongs to the V-ATPase proteolipid subunit family. V-ATPase is a heteromultimeric enzyme made up of two complexes: the ATP-hydrolytic V1 complex and the proton translocation V0 complex. The V1 complex consists of three catalytic AB heterodimers that form a heterohexamer, three peripheral stalks each consisting of EG heterodimers, one central rotor including subunits D and F, and the regulatory subunits C and H. The proton translocation complex V0 consists of the proton transport subunit a, a ring of proteolipid subunits c9c'', rotary subunit d, subunits e and f, and the accessory subunits vah-19/Ac45 and vah-20/PRR. In terms of tissue distribution, expressed in the H-shaped excretory cell, rectum, and a pair of cells posterior to the anus.

The protein resides in the membrane. Proton-conducting pore forming subunit of the V0 complex of vacuolar(H+)-ATPase (V-ATPase), a multisubunit enzyme composed of a peripheral complex (V1) that hydrolyzes ATP and a membrane integral complex (V0) that translocates protons. V-ATPase is responsible for acidifying and maintaining the pH of intracellular compartments and in some cell types, is targeted to the plasma membrane, where it is responsible for acidifying the extracellular environment. Involved in necrotic cell death. Required along with other vacuolar ATPase components for the removal of protein aggregates which form in immature oocytes in the distal gonad. This removal occurs as the oocytes mature and move to the proximal gonad, is triggered by the introduction of sperm through mating and occurs before fertilization. The introduction of sperm triggers V-ATPase accumulation in proximal oocytes and induces lysosomal acidification which leads to engulfing of protein aggregates by lysosomes and subsequent clearance of the aggregates. Lysosomal acidification also leads to changes in mitochondrial morphology and function. Mitochondria in distal immature oocytes are fragmented, produce high levels of reactive oxygen species (ROS) and have high membrane potential, indicative of metabolic inactivity. In contrast, mitochondria in proximal mature oocytes are tubular with lower ROS levels and membrane potential, indicative of an active metabolic state required for aggregate mobilization before clearance. In Caenorhabditis elegans, this protein is V-type proton ATPase 16 kDa proteolipid subunit c 2.